The primary structure comprises 68 residues: Large ribosomal subunit protein uL29 (68 aa).

This sequence belongs to the universal ribosomal protein uL29 family.

This chain is Large ribosomal subunit protein uL29 (rpl29), found in Pyrococcus abyssi (strain GE5 / Orsay).